The sequence spans 136 residues: Small ribosomal subunit protein uS8 (136 aa).

The protein belongs to the universal ribosomal protein uS8 family. As to quaternary structure, part of the 30S ribosomal subunit. Contacts proteins S5 and S12.

Functionally, one of the primary rRNA binding proteins, it binds directly to 16S rRNA central domain where it helps coordinate assembly of the platform of the 30S subunit. This Synechococcus sp. (strain JA-2-3B'a(2-13)) (Cyanobacteria bacterium Yellowstone B-Prime) protein is Small ribosomal subunit protein uS8.